The primary structure comprises 206 residues: uncharacterized protein (206 aa).

4 consecutive transmembrane segments (helical) span residues 9-29 (ILSL…SVLT), 47-67 (LGVV…LAFL), 74-94 (FFVI…INTI), and 150-170 (IAVI…FYAF).

It belongs to the Rht family.

Its subcellular location is the cell membrane. This is an uncharacterized protein from Synechocystis sp. (strain ATCC 27184 / PCC 6803 / Kazusa).